The chain runs to 361 residues: MMKTMRIAAIPGDGIGKEVLPEGIRVLQAAAERWGFALSFEQMEWASCEYYSHHGKMMPDDWHEQLSRFDAIYFGAVGWPDTVPDHISLWGSLLKFRREFDQYVNLRPVRLFPGVPCPLAGKQPGDIDFYVVRENTEGEYSSLGGRVNEGTEHEVVIQESVFTRRGVDRILRYAFELAQSRPRKTLTSATKSNGLAISMPYWDERVEAMAENYPEIRWDKQHIDILCARFVMQPERFDVVVASNLFGDILSDLGPACTGTIGIAPSANLNPERTFPSLFEPVHGSAPDIYGKNIANPIATIWAGAMMLDFLGNGDERFQQAHNGILAAIEEVIAHGPKTPDMKGNATTPQVADAICKIILR.

Mn(2+)-binding residues include Asp-224, Asp-248, and Asp-252.

This sequence belongs to the isocitrate and isopropylmalate dehydrogenases family. It depends on Mg(2+) as a cofactor. Mn(2+) is required as a cofactor.

Its subcellular location is the cytoplasm. The enzyme catalyses (R)-malate + NAD(+) = pyruvate + CO2 + NADH. Catalyzes the NAD(+)-dependent oxidative decarboxylation of D-malate into pyruvate. Is essential for aerobic growth on D-malate as the sole carbon source. But is not required for anaerobic D-malate utilization, although DmlA is expressed and active in those conditions. Appears to be not able to use L-tartrate as a substrate for dehydrogenation instead of D-malate. The chain is D-malate dehydrogenase [decarboxylating] (dmlA) from Escherichia coli (strain K12).